We begin with the raw amino-acid sequence, 276 residues long: Large ribosomal subunit protein uL2 (276 aa).

The segment at 219–276 (TVRGSAMNPNDHPHGGGEGRTSIGRPAPVTPWGKPALGYKTRDSKKASNKMIVSRRKK) is disordered.

The protein belongs to the universal ribosomal protein uL2 family. As to quaternary structure, part of the 50S ribosomal subunit. Forms a bridge to the 30S subunit in the 70S ribosome.

Functionally, one of the primary rRNA binding proteins. Required for association of the 30S and 50S subunits to form the 70S ribosome, for tRNA binding and peptide bond formation. It has been suggested to have peptidyltransferase activity; this is somewhat controversial. Makes several contacts with the 16S rRNA in the 70S ribosome. The protein is Large ribosomal subunit protein uL2 of Alkaliphilus oremlandii (strain OhILAs) (Clostridium oremlandii (strain OhILAs)).